The sequence spans 315 residues: 4-diphosphocytidyl-2-C-methyl-D-erythritol kinase (315 aa).

Lys-8 is an active-site residue. Residue 93-103 (PVAAGLAGGSS) participates in ATP binding. The active site involves Asp-135.

This sequence belongs to the GHMP kinase family. IspE subfamily.

It catalyses the reaction 4-CDP-2-C-methyl-D-erythritol + ATP = 4-CDP-2-C-methyl-D-erythritol 2-phosphate + ADP + H(+). The protein operates within isoprenoid biosynthesis; isopentenyl diphosphate biosynthesis via DXP pathway; isopentenyl diphosphate from 1-deoxy-D-xylulose 5-phosphate: step 3/6. In terms of biological role, catalyzes the phosphorylation of the position 2 hydroxy group of 4-diphosphocytidyl-2C-methyl-D-erythritol. The sequence is that of 4-diphosphocytidyl-2-C-methyl-D-erythritol kinase from Heliobacterium modesticaldum (strain ATCC 51547 / Ice1).